Reading from the N-terminus, the 98-residue chain is MASINRTIEIMKKHGVSKQHLLEEINKKRESNCLVERSNQVSLLRVQKRHFPDAYQSFTDTTTKEPVPNSGRSSWIKLSLLAHMERKHFPPKNNAIFG.

This sequence belongs to the SPATA45 family.

The chain is Spermatogenesis-associated protein 45 (SPATA45) from Homo sapiens (Human).